A 409-amino-acid polypeptide reads, in one-letter code: Argininosuccinate synthase (409 aa).

Residues 13–21 and Ala-40 each bind ATP; that span reads AYSGGLDTS. L-citrulline-binding residues include Tyr-91 and Ser-96. Residue Gly-121 participates in ATP binding. Residues Thr-123, Asn-127, and Asp-128 each coordinate L-aspartate. Asn-127 lines the L-citrulline pocket. Arg-131, Ser-183, Ser-192, Glu-268, and Tyr-280 together coordinate L-citrulline.

The protein belongs to the argininosuccinate synthase family. Type 1 subfamily. In terms of assembly, homotetramer.

It localises to the cytoplasm. It catalyses the reaction L-citrulline + L-aspartate + ATP = 2-(N(omega)-L-arginino)succinate + AMP + diphosphate + H(+). The protein operates within amino-acid biosynthesis; L-arginine biosynthesis; L-arginine from L-ornithine and carbamoyl phosphate: step 2/3. This is Argininosuccinate synthase from Saccharophagus degradans (strain 2-40 / ATCC 43961 / DSM 17024).